The sequence spans 673 residues: Probable serine/threonine-protein kinase SCO3848 (673 aa).

The 267-residue stretch at 11–277 folds into the Protein kinase domain; the sequence is YELGPVLGRG…EMRVDIEACL (267 aa). ATP-binding positions include 17-25 and K40; that span reads LGRGGMAEV. Catalysis depends on D138, which acts as the Proton acceptor. A disordered region spans residues 302–345; the sequence is DQPTTALRSDGGGGATTMLPPMNPDDGGYGYDERPDRRRQQPRK. PASTA domains lie at 379 to 445, 446 to 511, 512 to 580, and 581 to 649; these read GNDK…VVST, GAPK…EVAK, AEEK…VVGK, and AVEK…MTVP. The segment at 472–500 is disordered; the sequence is FEVETKQTESSQDEGTILSQNPDPGKELE. The span at 479–493 shows a compositional bias: polar residues; that stretch reads TESSQDEGTILSQNP. Disordered stretches follow at residues 613–641 and 653–673; these read AQGSPGDDNAKVFASNPQPGSEVDDPAAT and GNGNGGNGNGGAIAGLPGFGD.

It belongs to the protein kinase superfamily. Ser/Thr protein kinase family.

The catalysed reaction is L-seryl-[protein] + ATP = O-phospho-L-seryl-[protein] + ADP + H(+). It carries out the reaction L-threonyl-[protein] + ATP = O-phospho-L-threonyl-[protein] + ADP + H(+). The chain is Probable serine/threonine-protein kinase SCO3848 from Streptomyces coelicolor (strain ATCC BAA-471 / A3(2) / M145).